A 740-amino-acid polypeptide reads, in one-letter code: F-BAR and double SH3 domains protein 2 (740 aa).

Positions 8 to 282 (VKVTQELKNI…NSSKVVRDYN (275 aa)) constitute an F-BAR domain. Residues 303–323 (PCDSDTSRQLESETGTTEEHS) are disordered. A compositionally biased stretch (basic and acidic residues) spans 307 to 323 (DTSRQLESETGTTEEHS). Positions 356 to 397 (GAAVSEQSRAELEQKIDEARENIRKAEIIKLKAEARLDLLKQ) form a coiled coil. SH3 domains follow at residues 469–530 (NYPL…FPTS) and 567–629 (ASVC…ELSA). The tract at residues 567 to 629 (ASVCFVKALY…PSVLVEELSA (63 aa)) is required and sufficient for location at clathrin-coated pits. The interval 633–740 (GDTPWMREIQ…KIEDVEITLV (108 aa)) is disordered. A compositionally biased stretch (pro residues) spans 646–657 (SPKPHASLPPLP). Phosphoserine is present on residues Ser-675 and Ser-681.

Homodimer. Interacts (via SH3 domain 2) with ITSN1 (via SH3 domain 4). Recruited to clathrin-coated pits during a mid-to-late stage of assembly via interaction with ITSN1. Interacts (via SH3 domain 1) with WASL. Interacts with WAS. Interacts with CASK and MAGI1. CASK inhibits interaction with MAGI1. Phosphorylated. Phosphorylation on a Ser residue is important for recruitment to the cell membrane and for its role in promoting endocytosis. As to expression, liver, brain, heart, placenta, skeletal muscle, pancreas, lung and kidney.

It is found in the cytoplasm. The protein resides in the cell junction. It localises to the membrane. The protein localises to the clathrin-coated pit. Its subcellular location is the cell membrane. It is found in the cell projection. The protein resides in the stereocilium. In terms of biological role, adapter protein that plays a role in endocytosis via clathrin-coated pits. Contributes to the internalization of cell surface receptors, such as integrin ITGB1 and transferrin receptor. Promotes endocytosis of EGFR in cancer cells, and thereby contributes to the down-regulation of EGFR signaling. Recruited to clathrin-coated pits during a mid-to-late stage of assembly, where it is required for normal progress from U-shaped intermediate stage pits to terminal, omega-shaped pits. Binds to membranes enriched in phosphatidylinositol 3,4-bisphosphate or phosphatidylinositol 3,4,5-trisphosphate. When bound to membranes, promotes actin polymerization via its interaction with WAS and/or WASL which leads to the activation of the Arp2/3 complex. Does not promote actin polymerisation in the absence of membranes. The protein is F-BAR and double SH3 domains protein 2 (FCHSD2) of Homo sapiens (Human).